The primary structure comprises 335 residues: Biotin synthase (335 aa).

The region spanning 41–269 (KQIQVCKLIS…TSDVRLSAGR (229 aa)) is the Radical SAM core domain. The [4Fe-4S] cluster site is built by C56, C60, and C63. Residues C100, C132, C192, and R264 each coordinate [2Fe-2S] cluster.

The protein belongs to the radical SAM superfamily. Biotin synthase family. As to quaternary structure, homodimer. Requires [4Fe-4S] cluster as cofactor. The cofactor is [2Fe-2S] cluster.

The enzyme catalyses (4R,5S)-dethiobiotin + (sulfur carrier)-SH + 2 reduced [2Fe-2S]-[ferredoxin] + 2 S-adenosyl-L-methionine = (sulfur carrier)-H + biotin + 2 5'-deoxyadenosine + 2 L-methionine + 2 oxidized [2Fe-2S]-[ferredoxin]. Its pathway is cofactor biosynthesis; biotin biosynthesis; biotin from 7,8-diaminononanoate: step 2/2. Its function is as follows. Catalyzes the conversion of dethiobiotin (DTB) to biotin by the insertion of a sulfur atom into dethiobiotin via a radical-based mechanism. This chain is Biotin synthase, found in Nostoc sp. (strain PCC 7120 / SAG 25.82 / UTEX 2576).